The primary structure comprises 162 residues: Solute carrier family 2, facilitated glucose transporter member 4 (162 aa).

The Extracellular portion of the chain corresponds to 1–13; sequence TSIFETAGVGQPA. Residues 14–34 form a helical membrane-spanning segment; the sequence is YATIGAGVVNTVFTLVSVFLV. N23 provides a ligand contact to D-glucose. Over 35–43 the chain is Cytoplasmic; sequence ERAGRRTLH. A helical transmembrane segment spans residues 44–64; it reads LLGLAGMCGCAILMTIALLLL. Topologically, residues 65-75 are extracellular; it reads ERLPAMSYVSI. A helical transmembrane segment spans residues 76 to 96; it reads VAIFGFVAFFEIGPGPIPWFI. The D-glucose site is built by E86 and W94. Residues 97–107 lie on the Cytoplasmic side of the membrane; the sequence is VAELFSQGPRP. A helical membrane pass occupies residues 108 to 128; the sequence is AAMAVAGFCNWTSNFIIGMGF. Residues 129 to 135 lie on the Extracellular side of the membrane; the sequence is QYIAXAM. Residues 136-156 traverse the membrane as a helical segment; that stretch reads GPYVFLLFAVLLLAFFIFTFL. Residues 157–162 are Cytoplasmic-facing; it reads KVPETR.

Belongs to the major facilitator superfamily. Sugar transporter (TC 2.A.1.1) family. Glucose transporter subfamily. As to quaternary structure, binds to DAXX. Interacts via its N-terminus with SRFBP1. Interacts with NDUFA9. Interacts with TRARG1; the interaction is required for proper SLC2A4 recycling after insulin stimulation. Post-translationally, sumoylated. In terms of processing, palmitoylated. Palmitoylation by ZDHHC7 controls the insulin-dependent translocation of GLUT4 to the plasma membrane.

Its subcellular location is the cell membrane. It is found in the endomembrane system. It localises to the cytoplasm. The protein resides in the perinuclear region. The enzyme catalyses D-glucose(out) = D-glucose(in). Insulin-regulated facilitative glucose transporter, which plays a key role in removal of glucose from circulation. Response to insulin is regulated by its intracellular localization: in the absence of insulin, it is efficiently retained intracellularly within storage compartments in muscle and fat cells. Upon insulin stimulation, translocates from these compartments to the cell surface where it transports glucose from the extracellular milieu into the cell. This chain is Solute carrier family 2, facilitated glucose transporter member 4, found in Canis lupus familiaris (Dog).